Consider the following 251-residue polypeptide: Endonuclease NucS (251 aa).

The segment covering 230–240 has biased composition (basic and acidic residues); it reads LEPPKKGNEKR. The tract at residues 230-251 is disordered; the sequence is LEPPKKGNEKRSKQKTLDFFTP.

This sequence belongs to the NucS endonuclease family. As to quaternary structure, homodimer. Interacts with PCNA.

It localises to the cytoplasm. Its activity is regulated as follows. Activity is modulated by PCNA. PCNA increases the binding affinity of NucS towards ssDNA as well as branched DNA substrates carrying either 3' or 5' flaps. PCNA is also required for optimal loading of NucS on its substrates and to direct activity towards ss/dsDNA junction. Its function is as follows. Cleaves both 3' and 5' ssDNA extremities of branched DNA structures. Binds to ssDNA. This is Endonuclease NucS from Pyrococcus abyssi (strain GE5 / Orsay).